Reading from the N-terminus, the 306-residue chain is Pre-mRNA-splicing factor cwf26 (306 aa).

The disordered stretch occupies residues 130 to 152 (KAEERRKREEKSSNLDEEELRKS). A coiled-coil region spans residues 130–198 (KAEERRKREE…KEQQQGVVQV (69 aa)).

The protein belongs to the CWC26 family. As to quaternary structure, belongs to the 40S cdc5-associated complex (or cwf complex), a spliceosome sub-complex reminiscent of a late-stage spliceosome composed of the U2, U5 and U6 snRNAs and at least brr2, cdc5, cwf2/prp3, cwf3/syf1, cwf4/syf3, cwf5/ecm2, spp42/cwf6, cwf7/spf27, cwf8, cwf9, cwf10, cwf11, cwf12, prp45/cwf13, cwf14, cwf15, cwf16, cwf17, cwf18, cwf19, cwf20, cwf21, cwf22, cwf23, cwf24, cwf25, cwf26, cyp7/cwf27, cwf28, cwf29/ist3, lea1, msl1, prp5/cwf1, prp10, prp12/sap130, prp17, prp22, sap61, sap62, sap114, sap145, slu7, smb1, smd1, smd3, smf1, smg1 and syf2.

It localises to the cytoplasm. It is found in the nucleus. In terms of biological role, involved in mRNA splicing. The protein is Pre-mRNA-splicing factor cwf26 (cwf26) of Schizosaccharomyces pombe (strain 972 / ATCC 24843) (Fission yeast).